The chain runs to 777 residues: uncharacterized protein (777 aa).

8 disordered regions span residues 1–101, 128–150, 219–267, 334–366, 391–466, 529–577, 590–622, and 713–751; these read MNNN…NLSN, SYNN…NDDN, HHIH…NNMN, SLPF…GIDD, ISNS…ATIS, KNLN…NNKG, LAQE…ISTI, and EKQG…KWKP. Composition is skewed to low complexity over residues 128–147 and 243–265; these read SYNN…NNIN and NNNN…NHNN. The span at 334-343 shows a compositional bias: polar residues; sequence SLPFSSLSDN. A compositionally biased stretch (acidic residues) spans 344–366; sequence NGDDDDDGIDDGIDDGIDDGIDD. Residues 391–407 show a composition bias toward polar residues; it reads ISNSFHQNQSPCNNSFK. Low complexity-rich tracts occupy residues 408 to 466 and 532 to 574; these read NNNN…ATIS and NNNN…NNKN. Residues 597–606 are compositionally biased toward basic and acidic residues; it reads EQNKTKKELE. 2 stretches are compositionally biased toward acidic residues: residues 607-620 and 718-730; these read EVKE…EEIS and DDPE…DSDS. Positions 731–740 are enriched in low complexity; it reads DSNSNSDSSD.

This is an uncharacterized protein from Dictyostelium discoideum (Social amoeba).